The sequence spans 427 residues: Serine--tRNA ligase (427 aa).

L-serine is bound at residue 229–231; that stretch reads TAE. An ATP-binding site is contributed by 260–262; that stretch reads RSE. Glutamate 283 serves as a coordination point for L-serine. 347-350 contributes to the ATP binding site; that stretch reads EISS. Serine 383 contributes to the L-serine binding site.

The protein belongs to the class-II aminoacyl-tRNA synthetase family. Type-1 seryl-tRNA synthetase subfamily. In terms of assembly, homodimer. The tRNA molecule binds across the dimer.

The protein localises to the cytoplasm. It catalyses the reaction tRNA(Ser) + L-serine + ATP = L-seryl-tRNA(Ser) + AMP + diphosphate + H(+). It carries out the reaction tRNA(Sec) + L-serine + ATP = L-seryl-tRNA(Sec) + AMP + diphosphate + H(+). The protein operates within aminoacyl-tRNA biosynthesis; selenocysteinyl-tRNA(Sec) biosynthesis; L-seryl-tRNA(Sec) from L-serine and tRNA(Sec): step 1/1. Its function is as follows. Catalyzes the attachment of serine to tRNA(Ser). Is also able to aminoacylate tRNA(Sec) with serine, to form the misacylated tRNA L-seryl-tRNA(Sec), which will be further converted into selenocysteinyl-tRNA(Sec). The polypeptide is Serine--tRNA ligase (Nitrosococcus oceani (strain ATCC 19707 / BCRC 17464 / JCM 30415 / NCIMB 11848 / C-107)).